Here is a 393-residue protein sequence, read N- to C-terminus: NAD(P)H-quinone oxidoreductase subunit H, chloroplastic (393 aa).

This sequence belongs to the complex I 49 kDa subunit family. NDH is composed of at least 16 different subunits, 5 of which are encoded in the nucleus.

The protein resides in the plastid. Its subcellular location is the chloroplast thylakoid membrane. It carries out the reaction a plastoquinone + NADH + (n+1) H(+)(in) = a plastoquinol + NAD(+) + n H(+)(out). It catalyses the reaction a plastoquinone + NADPH + (n+1) H(+)(in) = a plastoquinol + NADP(+) + n H(+)(out). Functionally, NDH shuttles electrons from NAD(P)H:plastoquinone, via FMN and iron-sulfur (Fe-S) centers, to quinones in the photosynthetic chain and possibly in a chloroplast respiratory chain. The immediate electron acceptor for the enzyme in this species is believed to be plastoquinone. Couples the redox reaction to proton translocation, and thus conserves the redox energy in a proton gradient. The polypeptide is NAD(P)H-quinone oxidoreductase subunit H, chloroplastic (Gossypium hirsutum (Upland cotton)).